The chain runs to 908 residues: Auxin response factor 6 (908 aa).

Residues 1 to 21 (MKLSPSAGGVSDQPPSPPEVA) are disordered. Residues 134–236 (FCKTLTASDT…QLLLGIRRAN (103 aa)) constitute a DNA-binding region (TF-B3). The segment at 525 to 556 (NEQKPQLQPQQQQQESHQQQPQHQQMQQQKHL) is disordered. Low complexity predominate over residues 526–556 (EQKPQLQPQQQQQESHQQQPQHQQMQQQKHL). The region spanning 777 to 861 (ATFVKVYKSG…SCIKILSPQE (85 aa)) is the PB1 domain.

Belongs to the ARF family. In terms of assembly, homodimers and heterodimers.

The protein resides in the nucleus. Auxin response factors (ARFs) are transcriptional factors that bind specifically to the DNA sequence 5'-TGTCTC-3' found in the auxin-responsive promoter elements (AuxREs). This is Auxin response factor 6 (ARF6) from Oryza sativa subsp. indica (Rice).